The following is a 424-amino-acid chain: Tyrosine--tRNA ligase (424 aa).

Position 33 (Y33) interacts with L-tyrosine. The short motif at 38–47 is the 'HIGH' region element; it reads PSADSLHIGH. Positions 170 and 174 each coordinate L-tyrosine. The short motif at 230–234 is the 'KMSKS' region element; sequence KFGKT. Residue K233 coordinates ATP. One can recognise an S4 RNA-binding domain in the interval 357-424; sequence MSLIDALVRC…RRHYHLIRLV (68 aa).

This sequence belongs to the class-I aminoacyl-tRNA synthetase family. TyrS type 1 subfamily. As to quaternary structure, homodimer.

It localises to the cytoplasm. The enzyme catalyses tRNA(Tyr) + L-tyrosine + ATP = L-tyrosyl-tRNA(Tyr) + AMP + diphosphate + H(+). Its function is as follows. Catalyzes the attachment of tyrosine to tRNA(Tyr) in a two-step reaction: tyrosine is first activated by ATP to form Tyr-AMP and then transferred to the acceptor end of tRNA(Tyr). In Roseiflexus castenholzii (strain DSM 13941 / HLO8), this protein is Tyrosine--tRNA ligase.